A 469-amino-acid polypeptide reads, in one-letter code: E3 ubiquitin-protein ligase TRAIP (469 aa).

The RING-type zinc-finger motif lies at 7–50 (CTICSDFFDHSRDVAAIHCGHTFHLQCLIQWFETAPSRTCPQCR). 2 coiled-coil regions span residues 70–177 (EENV…QSQR) and 201–280 (CVSL…TLNL). An interaction with CYLD region spans residues 211–469 (LKEARKASGE…QAKLDTFLWS (259 aa)). A Glycyl lysine isopeptide (Lys-Gly) (interchain with G-Cter in SUMO2) cross-link involves residue lysine 304. The short motif at 460-469 (QAKLDTFLWS) is the PIP-box element.

This sequence belongs to the TRAIP family. In terms of assembly, interacts (via PIP-box) with PCNA. Binds TRAF1, TRAF2, TRAF3, TRAF5 and TRAF6 is part of the receptor-TRAF signaling complex. May interact with CYLD; the C-terminus interacts with CYLD, however the interaction was not detected with the full-length protein. Interacts with POLK and POLN. Interacts with UIMC1. Sumoylated; sumoylation is required for nuclear localization. Sumoylation increases protein stability, possibly by preventing ubiquitination. Post-translationally, autoubiquitinated.

It is found in the nucleus. The protein resides in the nucleoplasm. It localises to the nucleolus. Its subcellular location is the chromosome. The protein localises to the cytoplasm. It is found in the perinuclear region. The enzyme catalyses S-ubiquitinyl-[E2 ubiquitin-conjugating enzyme]-L-cysteine + [acceptor protein]-L-lysine = [E2 ubiquitin-conjugating enzyme]-L-cysteine + N(6)-ubiquitinyl-[acceptor protein]-L-lysine.. The protein operates within protein modification; protein ubiquitination. E3 ubiquitin ligase required to protect genome stability in response to replication stress. Acts as a key regulator of interstrand cross-link repair, which takes place when both strands of duplex DNA are covalently tethered together, thereby blocking replication and transcription. Controls the choice between the two pathways of replication-coupled interstrand-cross-link repair by mediating ubiquitination of MCM7 subunit of the CMG helicase complex. Short ubiquitin chains on MCM7 promote recruitment of DNA glycosylase NEIL3. If the interstrand cross-link cannot be cleaved by NEIL3, the ubiquitin chains continue to grow on MCM7, promoting the unloading of the CMG helicase complex by the VCP/p97 ATPase, enabling the Fanconi anemia DNA repair pathway. Only catalyzes ubiquitination of MCM7 when forks converge. Also involved in the repair of covalent DNA-protein cross-links (DPCs) during DNA synthesis: promotes ubiquitination of DPCs, leading to their degradation by the proteasome. Has also been proposed to play a role in promoting translesion synthesis by mediating the assembly of 'Lys-63'-linked poly-ubiquitin chains on the Y-family polymerase POLN in order to facilitate bypass of DNA lesions and preserve genomic integrity. The function in translesion synthesis is however controversial. Acts as a regulator of the spindle assembly checkpoint. Also acts as a negative regulator of innate immune signaling by inhibiting activation of NF-kappa-B mediated by TNF. Negatively regulates TLR3/4- and RIG-I-mediated IRF3 activation and subsequent IFNB1 production and cellular antiviral response by promoting 'Lys-48'-linked polyubiquitination of TNK1 leading to its proteasomal degradation. This is E3 ubiquitin-protein ligase TRAIP from Homo sapiens (Human).